Reading from the N-terminus, the 949-residue chain is MTWKMGPHFTMLLAMWLVCGSASQSSALDSDGRPGRKVPLASPISSRSARYLRHTGRSGGVEKSTQEEPNPQSFQRRKSVPVLRLAHPTVRPPPSGINGAPVRPELKPIARGSASEMVRDEGSSARTRMLRFPSGSSSPNILASFAGKNRVWVISAPHASEGYYRLMMSLLKDDVYCELAERHIQQIVLFHQAGEEGGKVRRITSEGQILEQPLDPNLIPKLMSFLKLEKGKFSMVLLKKTLQVEERYPYPVRLEAMYEVIDQGPIRRIEKIRQKGFVQKCKASGIEGHVVQEGNNGGGGGGSTGLGSDKRKEDPRRTQIHPTREPPRKQTTTKAATPQPPPTPRATTLPPAPVTTATRATSRVVTVAARPTTTTAYPATQRPWTSRLHPFSVSHRPPATAEMTTVRGPSVSEQLYPLPRKEQQREKPQATRRPNKATNYGSFTATPPTTLWEGSTRAVGTSRFRDNRTDKREHGHQDPNVVPGPHKPIKGKLPKKKEKILSNEYEAKYDLSRPTTSQGEEELQVDNIPSQNAKESKKHEKPEKPEKEKKKKGKSAKPDKLLRSEKQMKKAEKKSKQEKEKTKKKKAGKTEQDDYQKPTAKHLAPSPRKSVADLLGSFEGKRRLLLITTPKAENNMYVQQRDEYLESFCKMATRRISVVTIFGPVNNSSMKIDHFQLDNEKPMRVVDDEDLVDQHLISELRKEYGMTYNDFFMVLTDVDLRVKQYYEVPIAMKSVFDLIDTFQSRIKDMEKQKKEGITCKEDKRQSLENFLSRFRWRRRLLVISAPNDEDWAYSQQLSALNGQACNFGLRHITILKLLGVGEEVGGILELFPINGSSTVEREDVPAHLVKDIRNYFQVSPEYFSMLLVGKDGNVKSWYPSPMWSMVIVYDLIDSMQLRRQEMAIQQSLGMRCPEDEYAGYGYHSYHQGYQDGYQDDYRHHESYHHGYPY.

The signal sequence occupies residues 1-27 (MTWKMGPHFTMLLAMWLVCGSASQSSA). Disordered regions lie at residues 24–79 (QSSA…RRKS), 289–360 (HVVQ…ATRA), and 408–609 (GPSV…SPRK). Gly residues predominate over residues 295 to 305 (NNGGGGGGSTG). The segment covering 308–328 (SDKRKEDPRRTQIHPTREPPR) has biased composition (basic and acidic residues). A compositionally biased stretch (low complexity) spans 345-360 (RATTLPPAPVTTATRA). Positions 419–429 (PRKEQQREKPQ) are enriched in basic and acidic residues. Residues 436–453 (KATNYGSFTATPPTTLWE) show a composition bias toward polar residues. Basic and acidic residues predominate over residues 463–477 (RFRDNRTDKREHGHQ). An N-linked (GlcNAc...) asparagine glycan is attached at Asn-467. Residues 487–498 (KPIKGKLPKKKE) show a composition bias toward basic residues. Composition is skewed to basic and acidic residues over residues 499–511 (KILSNEYEAKYDL), 534–548 (KESKKHEKPEKPEKE), and 556–581 (AKPDKLLRSEKQMKKAEKKSKQEKEK). Residues Lys-544 and Lys-547 each participate in a glycyl lysine isopeptide (Lys-Gly) (interchain with G-Cter in SUMO2) cross-link. The stretch at 559 to 587 (DKLLRSEKQMKKAEKKSKQEKEKTKKKKA) forms a coiled coil.

The protein belongs to the CCDC80 family. As to quaternary structure, binds to various extracellular matrix proteins. Post-translationally, phosphorylated. In terms of tissue distribution, isoform 2 is expressed in uterus, liver, lung, spleen, kidney, heart, bladder, skeletal muscle and brain (at protein level). Isoform 2 is expressed very low in mammary gland and intestine (at protein level). Isoform 2 is expressed in lactating mammary glands and mammary tumors (at protein level). Ubiquitous (isoform 1). Isoform 2 is expressed in ovary, uterus, mammary glands, liver, lung, spleen, kidney, heart, bladder, intestine, skeletal muscle and brain.

It is found in the secreted. Its subcellular location is the extracellular space. The protein localises to the extracellular matrix. Promotes cell adhesion and matrix assembly. This is Coiled-coil domain-containing protein 80 (Ccdc80) from Rattus norvegicus (Rat).